The primary structure comprises 104 residues: Pyrimidine/purine nucleoside phosphorylase (104 aa).

This sequence belongs to the nucleoside phosphorylase PpnP family.

The enzyme catalyses a purine D-ribonucleoside + phosphate = a purine nucleobase + alpha-D-ribose 1-phosphate. The catalysed reaction is adenosine + phosphate = alpha-D-ribose 1-phosphate + adenine. It carries out the reaction cytidine + phosphate = cytosine + alpha-D-ribose 1-phosphate. It catalyses the reaction guanosine + phosphate = alpha-D-ribose 1-phosphate + guanine. The enzyme catalyses inosine + phosphate = alpha-D-ribose 1-phosphate + hypoxanthine. The catalysed reaction is thymidine + phosphate = 2-deoxy-alpha-D-ribose 1-phosphate + thymine. It carries out the reaction uridine + phosphate = alpha-D-ribose 1-phosphate + uracil. It catalyses the reaction xanthosine + phosphate = alpha-D-ribose 1-phosphate + xanthine. In terms of biological role, catalyzes the phosphorolysis of diverse nucleosides, yielding D-ribose 1-phosphate and the respective free bases. Can use uridine, adenosine, guanosine, cytidine, thymidine, inosine and xanthosine as substrates. Also catalyzes the reverse reactions. This is Pyrimidine/purine nucleoside phosphorylase from Pelobacter propionicus (strain DSM 2379 / NBRC 103807 / OttBd1).